The sequence spans 331 residues: Ketol-acid reductoisomerase (NADP(+)) (331 aa).

Residues 2–182 (ARMYYDQDAN…GGTRAGILET (181 aa)) form the KARI N-terminal Rossmann domain. NADP(+) is bound by residues 25–28 (YGSQ), S51, S53, and 83–86 (DEVQ). H108 is an active-site residue. G134 is a binding site for NADP(+). Positions 183–328 (TFREETETDL…KDLRAMFSWL (146 aa)) constitute a KARI C-terminal knotted domain. Residues D191, E195, E227, and E231 each contribute to the Mg(2+) site. S252 is a substrate binding site.

It belongs to the ketol-acid reductoisomerase family. In terms of assembly, homooctamer. It depends on Mg(2+) as a cofactor.

It catalyses the reaction (2R)-2,3-dihydroxy-3-methylbutanoate + NADP(+) = (2S)-2-acetolactate + NADPH + H(+). It carries out the reaction (2R,3R)-2,3-dihydroxy-3-methylpentanoate + NADP(+) = (S)-2-ethyl-2-hydroxy-3-oxobutanoate + NADPH + H(+). Its pathway is amino-acid biosynthesis; L-isoleucine biosynthesis; L-isoleucine from 2-oxobutanoate: step 2/4. It participates in amino-acid biosynthesis; L-valine biosynthesis; L-valine from pyruvate: step 2/4. Functionally, involved in the biosynthesis of branched-chain amino acids (BCAA). Catalyzes an alkyl-migration followed by a ketol-acid reduction of (S)-2-acetolactate (S2AL) to yield (R)-2,3-dihydroxy-isovalerate. In the isomerase reaction, S2AL is rearranged via a Mg-dependent methyl migration to produce 3-hydroxy-3-methyl-2-ketobutyrate (HMKB). In the reductase reaction, this 2-ketoacid undergoes a metal-dependent reduction by NADPH to yield (R)-2,3-dihydroxy-isovalerate. The protein is Ketol-acid reductoisomerase (NADP(+)) of Synechocystis sp. (strain ATCC 27184 / PCC 6803 / Kazusa).